Consider the following 264-residue polypeptide: Small ribosomal subunit protein uS2 (264 aa).

The tract at residues 233–264 (AQTQAGGKAEQEAPATEEAADAQTEEAATPAE) is disordered.

Belongs to the universal ribosomal protein uS2 family.

The sequence is that of Small ribosomal subunit protein uS2 from Psychrobacter arcticus (strain DSM 17307 / VKM B-2377 / 273-4).